A 773-amino-acid polypeptide reads, in one-letter code: ATP-dependent permease MDL2, mitochondrial (773 aa).

Residues 1–90 (MLNGRLPLLR…SPISKGSARS (90 aa)) constitute a mitochondrion transit peptide. Polar residues predominate over residues 73–84 (PETSLPSASPIS). The disordered stretch occupies residues 73-95 (PETSLPSASPISKGSARSAHAKE). Positions 119-413 (LLTAILLLTI…LSTFYSEIMQ (295 aa)) constitute an ABC transmembrane type-1 domain. 3 helical membrane-spanning segments follow: residues 123–143 (ILLL…IGIV), 170–192 (FLSF…FILL), and 257–277 (VVGV…LLFF). 481–488 (GPSGRGKS) contributes to the ATP binding site. The region spanning 493 to 733 (LLLRYYNPTT…DDNDNNHDND (241 aa)) is the ABC transporter domain. 2 stretches are compositionally biased toward basic and acidic residues: residues 706-733 (KEDL…HDND) and 740-762 (ETKD…DAAK). The disordered stretch occupies residues 706 to 773 (KEDLNESKEH…ANPIKITPQP (68 aa)).

This sequence belongs to the ABC transporter superfamily. ABCB family. Mitochondrial peptide exporter (TC 3.A.1.212) subfamily.

It localises to the mitochondrion inner membrane. The sequence is that of ATP-dependent permease MDL2, mitochondrial (MDL2) from Saccharomyces cerevisiae (strain ATCC 204508 / S288c) (Baker's yeast).